A 41-amino-acid polypeptide reads, in one-letter code: Large ribosomal subunit protein bL36 (41 aa).

The protein belongs to the bacterial ribosomal protein bL36 family.

The chain is Large ribosomal subunit protein bL36 from Rickettsia massiliae (strain Mtu5).